Consider the following 522-residue polypeptide: Target of rapamycin complex 2 subunit MAPKAP1 (522 aa).

The residue at position 2 (Ala2) is an N-acetylalanine. Residues 2 to 184 (AFLDNPTIIL…KKIDVYLPLH (183 aa)) are interaction with MAP3K2. Positions 2–267 (AFLDNPTIIL…GFSTLALVEK (266 aa)) are interaction with NBN. Residue Thr86 is modified to Phosphothreonine. Ser128, Ser186, Ser315, and Ser356 each carry phosphoserine. The region spanning 139–267 (QSILSVRLEQ…GFSTLALVEK (129 aa)) is the CRIM domain. Residues 279–353 (LFVRINAAHG…QSAWEFCLVR (75 aa)) form an SIN1-type RBD region. Residues 382–487 (HYKSFKVSMI…IVLKVNYILE (106 aa)) form the SIN1-type PH domain. A 1,2-diacyl-sn-glycero-3-phospho-(1D-myo-inositol-3,4,5-trisphosphate) is bound at residue Arg393. The residue at position 398 (Thr398) is a Phosphothreonine. The a 1,2-diacyl-sn-glycero-3-phospho-(1D-myo-inositol-3,4,5-trisphosphate) site is built by Lys428 and Lys464. Residues 468 to 522 (FESDAATVNEIVLKVNYILESRASTARADYFAQKQRKLNRRTSFSFQKEKKSGQQ) are interaction with ATF2. Ser510 is subject to Phosphoserine.

The protein belongs to the SIN1 family. As to quaternary structure, component of the mechanistic target of rapamycin complex 2 (mTORC2), consisting in two heterotretramers composed of MTOR, MLST8, RICTOR and MAPKAP1/SIN1. The mTORC2 core complex associates with PRR5/PROTOR1 and/or PRR5L/PROTOR2. Contrary to mTORC1, mTORC2 does not bind to and is not sensitive to FKBP12-rapamycin. Interacts with MAP3K2. Interacts with ATF2. Interacts with MAPK8. Interacts with GTP-bound HRAS and KRAS; inhibiting their activity. Interacts with IFNAR2. Interacts with CCDC28B. In terms of assembly, interacts with NBN. In terms of processing, phosphorylation at Ser-128 by PKC promotes relocalization to the perinuclear region, where the mTORC2 complex specifically mediates phosphorylation of SGK1. Phosphorylated at Thr-86 by AKT1 or RPS6KB1 in the presence of growth factors; the effect of this phosphorylation is however unclear. According to two studies, phosphorylation at Thr-86 by AKT1 is part of a positive feedback loop that increases mTORC2 activation. According to another study, phosphorylation at Thr-86 and Thr-398 by RPS6KB1 promotes dissociation from the mTORC2 complex, leading to inhibit mTORC2 signaling. In terms of tissue distribution, ubiquitously expressed, with highest levels in heart and skeletal muscle.

Its subcellular location is the cell membrane. The protein resides in the endoplasmic reticulum membrane. The protein localises to the early endosome membrane. It is found in the late endosome membrane. It localises to the lysosome membrane. Its subcellular location is the golgi apparatus membrane. The protein resides in the mitochondrion outer membrane. The protein localises to the cytoplasm. It is found in the perinuclear region. It localises to the nucleus. Its subcellular location is the cytosol. With respect to regulation, phosphatidylinositol 3,4,5-trisphosphate (PI(3,4,5)P3) promotes MTOR activation by relieving MAPKAP1/SIN1-mediated inhibition of MTOR that takes place in absence of PI(3,4,5)P3. Functionally, component of the mechanistic target of rapamycin complex 2 (mTORC2), which transduces signals from growth factors to pathways involved in proliferation, cytoskeletal organization, lipogenesis and anabolic output. In response to growth factors, mTORC2 phosphorylates and activates AGC protein kinase family members, including AKT (AKT1, AKT2 and AKT3), PKC (PRKCA, PRKCB and PRKCE) and SGK1. In contrast to mTORC1, mTORC2 is nutrient-insensitive. Within the mTORC2 complex, MAPKAP1/SIN1 acts as a substrate adapter which recognizes and binds AGC protein kinase family members for phosphorylation by MTOR. mTORC2 plays a critical role in AKT1 activation by mediating phosphorylation of different sites depending on the context, such as 'Thr-450', 'Ser-473', 'Ser-477' or 'Thr-479', facilitating the phosphorylation of the activation loop of AKT1 on 'Thr-308' by PDPK1/PDK1 which is a prerequisite for full activation. mTORC2 catalyzes the phosphorylation of SGK1 at 'Ser-422' and of PRKCA on 'Ser-657'. The mTORC2 complex also phosphorylates various proteins involved in insulin signaling, such as FBXW8 and IGF2BP1. mTORC2 acts upstream of Rho GTPases to regulate the actin cytoskeleton, probably by activating one or more Rho-type guanine nucleotide exchange factors. mTORC2 promotes the serum-induced formation of stress-fibers or F-actin. MAPKAP1 inhibits MAP3K2 by preventing its dimerization and autophosphorylation. Inhibits HRAS and KRAS independently of mTORC2 complex. Enhances osmotic stress-induced phosphorylation of ATF2 and ATF2-mediated transcription. Involved in ciliogenesis, regulates cilia length through its interaction with CCDC28B independently of mTORC2 complex. Its function is as follows. In contrast to isoform 1, isoform 2 and isoform 6, isoform 4 is not a component of the a mTORC2 complex. The sequence is that of Target of rapamycin complex 2 subunit MAPKAP1 from Homo sapiens (Human).